The chain runs to 143 residues: Peptide methionine sulfoxide reductase MsrB (143 aa).

One can recognise a MsrB domain in the interval 16-139 (DAELRRRLTP…NSAALNFESR (124 aa)). Zn(2+)-binding residues include cysteine 55, cysteine 58, cysteine 104, and cysteine 107. The Nucleophile role is filled by cysteine 128.

It belongs to the MsrB Met sulfoxide reductase family. The cofactor is Zn(2+).

It catalyses the reaction L-methionyl-[protein] + [thioredoxin]-disulfide + H2O = L-methionyl-(R)-S-oxide-[protein] + [thioredoxin]-dithiol. In Burkholderia cenocepacia (strain ATCC BAA-245 / DSM 16553 / LMG 16656 / NCTC 13227 / J2315 / CF5610) (Burkholderia cepacia (strain J2315)), this protein is Peptide methionine sulfoxide reductase MsrB.